We begin with the raw amino-acid sequence, 364 residues long: 2-oxoadipate dioxygenase/decarboxylase, chloroplastic/amyloplastic (364 aa).

Residues 1–49 constitute a chloroplast transit peptide; it reads MAVALAGARSPGAGAILSLRRLAPAAAAPVRLGGSGTPGTRRRRGIAMA. Residues histidine 107 and arginine 111 each contribute to the 2-oxoadipate site. Histidine 107 provides a ligand contact to Fe(2+). Position 243 (histidine 243) interacts with Fe(2+). 2-oxoadipate is bound by residues glutamine 289 and tyrosine 313. Fe(2+) is bound at residue glutamate 315.

It belongs to the 2-oxoadipate dioxygenase/decarboxylase family. The cofactor is Fe(2+). Expressed in roots, stems, leaf sheaths, leaf blades, panicles, and endosperm.

It localises to the plastid. The protein resides in the chloroplast. Its subcellular location is the amyloplast. It catalyses the reaction 2-oxoadipate + O2 = (R)-2-hydroxyglutarate + CO2. The protein operates within amino-acid degradation. In terms of biological role, catalyzes the decarboxylation and hydroxylation of 2-oxoadipate (2OA) to form D-2-hydroxyglutarate (D-2-HGA). Is involved in a D-lysine catabolic pathway. Involved in the regulation of starch synthesis and amyloplast development within the peripheral endosperm during the grain-filling stage. The sequence is that of 2-oxoadipate dioxygenase/decarboxylase, chloroplastic/amyloplastic from Oryza sativa subsp. japonica (Rice).